Here is a 546-residue protein sequence, read N- to C-terminus: Nuclear pore complex protein Nup58 (546 aa).

17 repeat units span residues 22–23 (FG), 36–37 (FG), 45–46 (FG), 64–65 (FG), 73–74 (FG), 82–83 (FG), 92–93 (FG), 101–102 (FG), 110–111 (FG), 119–120 (FG), 128–129 (FG), 137–138 (FG), 146–147 (FG), 155–156 (FG), 166–167 (FG), 197–198 (FG), and 199–200 (FG). Residues 22–200 (FGARPATTTA…TTAPPAFGFG (179 aa)) form a 17 X 2 AA repeats of F-G region.

The protein belongs to the NUP58 family. Component of the nuclear pore complex. Interacts with Nup54. Interacts (via C-terminus) with fs(1)Yb; this interaction occurs in a RNA-independent manner. Interacts with sbr/nxf1. Interacts with Nxt1. Post-translationally, O-glycosylated; contains O-GlcNAc. O-GlcNAcylation increases with increasing ambient temperature.

It localises to the nucleus. Its subcellular location is the nuclear pore complex. Its function is as follows. Component of the nuclear pore complex, a complex required for the trafficking across the nuclear membrane. Together with Nup54, required for transposable element silencing regulation in ovarian follicle cells. By interacting with the nuclear (Nxf1/Nxt1) and cytosolic (fs(1)Yb) components of the flamenco (flam) transcripts processing pathway, enables export and subsequent piRNA production. This chain is Nuclear pore complex protein Nup58, found in Drosophila melanogaster (Fruit fly).